The sequence spans 340 residues: MSAVITSMIVIGAGSYGTALAITLARNGNKVLLWGHDPVHVQAMKVARCNHAFLPNVIFPSTLYLETSLPVALTASRNVLIVVPSNVFGSVLTRIKPHLRPDARIVWATKGLEMNTGRLLQDVARDILGGHIPLAVISGPTFARELAAGLPTAIAIAATDVTFSADLQQLLHCSKSLLVECNIDFIGVQLGGALKNIIAIGAGISDGLGFGANARAALITRGLAEISRLGKAMGATPSTFMGMAGLGDLVLTCTDNQSRNRRFGILIGQGIEVQTAQKNIGLVVEGYTNTKDVLKLASRYRVVMPITEQLYQILYHNKNVYDAALTLLGRYYKDKQISYL.

Serine 15, tyrosine 16, histidine 36, and lysine 110 together coordinate NADPH. The sn-glycerol 3-phosphate site is built by lysine 110, glycine 139, and threonine 141. NADPH is bound at residue alanine 143. Sn-glycerol 3-phosphate contacts are provided by lysine 195, aspartate 248, serine 258, arginine 259, and asparagine 260. Lysine 195 functions as the Proton acceptor in the catalytic mechanism. Arginine 259 contributes to the NADPH binding site. Residues valine 283 and glutamate 285 each coordinate NADPH.

It belongs to the NAD-dependent glycerol-3-phosphate dehydrogenase family.

It localises to the cytoplasm. The catalysed reaction is sn-glycerol 3-phosphate + NAD(+) = dihydroxyacetone phosphate + NADH + H(+). It catalyses the reaction sn-glycerol 3-phosphate + NADP(+) = dihydroxyacetone phosphate + NADPH + H(+). It functions in the pathway membrane lipid metabolism; glycerophospholipid metabolism. Functionally, catalyzes the reduction of the glycolytic intermediate dihydroxyacetone phosphate (DHAP) to sn-glycerol 3-phosphate (G3P), the key precursor for phospholipid synthesis. The chain is Glycerol-3-phosphate dehydrogenase [NAD(P)+] from Baumannia cicadellinicola subsp. Homalodisca coagulata.